A 190-amino-acid polypeptide reads, in one-letter code: Small ribosomal subunit protein uS5 (190 aa).

The S5 DRBM domain occupies 21–84 (FADRLVAINR…EQAKRQMIRV (64 aa)). Residues 156-190 (KKEQSPRSVAQRRGKKVADILPKRDEAPAAEAAEA) form a disordered region. The span at 171–182 (KVADILPKRDEA) shows a compositional bias: basic and acidic residues.

The protein belongs to the universal ribosomal protein uS5 family. In terms of assembly, part of the 30S ribosomal subunit. Contacts proteins S4 and S8.

Functionally, with S4 and S12 plays an important role in translational accuracy. Located at the back of the 30S subunit body where it stabilizes the conformation of the head with respect to the body. This chain is Small ribosomal subunit protein uS5, found in Ruegeria pomeroyi (strain ATCC 700808 / DSM 15171 / DSS-3) (Silicibacter pomeroyi).